The chain runs to 264 residues: S-adenosylmethionine decarboxylase proenzyme (264 aa).

Ser112 serves as the catalytic Schiff-base intermediate with substrate; via pyruvic acid. The residue at position 112 (Ser112) is a Pyruvic acid (Ser); by autocatalysis. The active-site Proton acceptor; for processing activity is the His117. The active-site Proton donor; for catalytic activity is the Cys140.

This sequence belongs to the prokaryotic AdoMetDC family. Type 2 subfamily. As to quaternary structure, heterooctamer of four alpha and four beta chains arranged as a tetramer of alpha/beta heterodimers. Requires pyruvate as cofactor. In terms of processing, is synthesized initially as an inactive proenzyme. Formation of the active enzyme involves a self-maturation process in which the active site pyruvoyl group is generated from an internal serine residue via an autocatalytic post-translational modification. Two non-identical subunits are generated from the proenzyme in this reaction, and the pyruvate is formed at the N-terminus of the alpha chain, which is derived from the carboxyl end of the proenzyme. The post-translation cleavage follows an unusual pathway, termed non-hydrolytic serinolysis, in which the side chain hydroxyl group of the serine supplies its oxygen atom to form the C-terminus of the beta chain, while the remainder of the serine residue undergoes an oxidative deamination to produce ammonia and the pyruvoyl group blocking the N-terminus of the alpha chain.

It catalyses the reaction S-adenosyl-L-methionine + H(+) = S-adenosyl 3-(methylsulfanyl)propylamine + CO2. The protein operates within amine and polyamine biosynthesis; S-adenosylmethioninamine biosynthesis; S-adenosylmethioninamine from S-adenosyl-L-methionine: step 1/1. Functionally, catalyzes the decarboxylation of S-adenosylmethionine to S-adenosylmethioninamine (dcAdoMet), the propylamine donor required for the synthesis of the polyamines spermine and spermidine from the diamine putrescine. This Citrobacter koseri (strain ATCC BAA-895 / CDC 4225-83 / SGSC4696) protein is S-adenosylmethionine decarboxylase proenzyme.